Consider the following 500-residue polypeptide: Alpha-L-arabinofuranosidase (500 aa).

An N-terminal signal peptide occupies residues 1 to 21 (MLSNARIIAAGCIAAGSLVAA). N-linked (GlcNAc...) asparagine glycosylation is present at Asn-467.

It belongs to the glycosyl hydrolase 54 family.

It catalyses the reaction Hydrolysis of terminal non-reducing alpha-L-arabinofuranoside residues in alpha-L-arabinosides.. It functions in the pathway glycan metabolism; L-arabinan degradation. The polypeptide is Alpha-L-arabinofuranosidase (abf1) (Hypocrea jecorina (Trichoderma reesei)).